We begin with the raw amino-acid sequence, 193 residues long: Bcl-2-binding component 3 (193 aa).

Disordered stretches follow at residues 1–31 (MARARQEGSSPEPVEGLARDSPRPFPLGRLM) and 71–131 (ALGG…VEEE). A Phosphoserine modification is found at Ser-10. The BH3 signature appears at 137-151 (IGAQLRRMADDLNAQ).

This sequence belongs to the Bcl-2 family. As to quaternary structure, interacts with MCL1 and BCL2A1. Interacts with BCL2 and BCL2L1/BCL-XL. Interacts (via BH3 domain) with NOL3 (via CARD domain); this interaction prevents BBC3 association with BCL2 and results in CASP8 activation.

It is found in the mitochondrion. Functionally, essential mediator of p53/TP53-dependent and p53/TP53-independent apoptosis. Promotes partial unfolding of BCL2L1 and dissociation of BCL2L1 from p53/TP53, releasing the bound p53/TP53 to induce apoptosis. Regulates ER stress-induced neuronal apoptosis. This is Bcl-2-binding component 3 (Bbc3) from Mus musculus (Mouse).